The primary structure comprises 152 residues: Transcriptional regulator MraZ (152 aa).

2 SpoVT-AbrB domains span residues 7–51 (KERH…APDR) and 89–132 (LEMV…DPQR).

The protein belongs to the MraZ family. As to quaternary structure, forms oligomers.

It is found in the cytoplasm. The protein resides in the nucleoid. The polypeptide is Transcriptional regulator MraZ (Pelodictyon phaeoclathratiforme (strain DSM 5477 / BU-1)).